Consider the following 890-residue polypeptide: Alanine--tRNA ligase (890 aa).

The Zn(2+) site is built by His572, His576, Cys674, and His678.

It belongs to the class-II aminoacyl-tRNA synthetase family. Requires Zn(2+) as cofactor.

Its subcellular location is the cytoplasm. The catalysed reaction is tRNA(Ala) + L-alanine + ATP = L-alanyl-tRNA(Ala) + AMP + diphosphate. Functionally, catalyzes the attachment of alanine to tRNA(Ala) in a two-step reaction: alanine is first activated by ATP to form Ala-AMP and then transferred to the acceptor end of tRNA(Ala). Also edits incorrectly charged Ser-tRNA(Ala) and Gly-tRNA(Ala) via its editing domain. The polypeptide is Alanine--tRNA ligase (Saccharopolyspora erythraea (strain ATCC 11635 / DSM 40517 / JCM 4748 / NBRC 13426 / NCIMB 8594 / NRRL 2338)).